Reading from the N-terminus, the 393-residue chain is S-adenosylmethionine synthase 3 (393 aa).

Glu-9 is a Mg(2+) binding site. Residue His-15 participates in ATP binding. Glu-43 is a K(+) binding site. L-methionine contacts are provided by Glu-56 and Gln-99. ATP contacts are provided by residues 167–169, 235–238, Asp-246, 252–253, Ala-269, Lys-273, and Lys-277; these read NGK, SGRF, and RK. Asp-246 contributes to the L-methionine binding site. Lys-277 provides a ligand contact to L-methionine.

This sequence belongs to the AdoMet synthase family. As to quaternary structure, homotetramer. Requires Mn(2+) as cofactor. Mg(2+) is required as a cofactor. It depends on Co(2+) as a cofactor. The cofactor is K(+). In terms of tissue distribution, mostly expressed in flowers, seedpods and roots, and, to a lower extent, in stems and leaves.

The protein localises to the cytoplasm. The enzyme catalyses L-methionine + ATP + H2O = S-adenosyl-L-methionine + phosphate + diphosphate. The protein operates within amino-acid biosynthesis; S-adenosyl-L-methionine biosynthesis; S-adenosyl-L-methionine from L-methionine: step 1/1. Functionally, catalyzes the formation of S-adenosylmethionine from methionine and ATP. The reaction comprises two steps that are both catalyzed by the same enzyme: formation of S-adenosylmethionine (AdoMet) and triphosphate, and subsequent hydrolysis of the triphosphate. The sequence is that of S-adenosylmethionine synthase 3 (MSAMS3) from Brassica juncea (Indian mustard).